Here is an 84-residue protein sequence, read N- to C-terminus: MKVSVLITLAVLGVMFLLTSAEERGSDQMDSPAWLKSMEIIFQSEERECRWMFGGCTTDSDCCEHLGCRWEKPSWCAWDGTFRK.

A signal peptide spans 1–21; sequence MKVSVLITLAVLGVMFLLTSA. The propeptide occupies 22–48; the sequence is EERGSDQMDSPAWLKSMEIIFQSEERE. 3 disulfides stabilise this stretch: Cys49-Cys63, Cys56-Cys68, and Cys62-Cys76.

Belongs to the neurotoxin 10 (Hwtx-1) family. 06 (F4b) subfamily. As to expression, expressed by the venom gland.

Its subcellular location is the secreted. In terms of biological role, probable ion channel inhibitor. The polypeptide is U2-theraphotoxin-Cg1b 2 (Chilobrachys guangxiensis (Chinese earth tiger tarantula)).